We begin with the raw amino-acid sequence, 319 residues long: Olfactory receptor 2S2 (319 aa).

Residues 1–26 (MEKANETSPVMGFVLLRLSAHPELEK) are Extracellular-facing. Asn5 is a glycosylation site (N-linked (GlcNAc...) asparagine). Residues 27-50 (TFFVLILLMYLVILLGNGVLILVT) traverse the membrane as a helical segment. Residues 51-58 (ILDSRLHT) lie on the Cytoplasmic side of the membrane. The helical transmembrane segment at 59-80 (PMYFFLGNLSFLDICFTTSSVP) threads the bilayer. The Extracellular portion of the chain corresponds to 81–101 (LVLDSFLTPQETISFSACAVQ). Cys98 and Cys190 are oxidised to a cystine. Residues 102-121 (MALSFAMAGTECLLLSMMAF) traverse the membrane as a helical segment. The Cytoplasmic portion of the chain corresponds to 122 to 140 (DRYVAICNPLRYSVIMSKA). A helical transmembrane segment spans residues 141–159 (AYMPMAASSWAIGGAASVV). Residues 160–196 (HTSLAIQLPFCGDNVINHFTCEILAVLKLACADISIN) are Extracellular-facing. Residues 197-220 (VISMEVTNVIFLGVPVLFISFSYV) form a helical membrane-spanning segment. At 221-237 (FIITTILRIPSAEGRKK) the chain is on the cytoplasmic side. A helical transmembrane segment spans residues 238 to 260 (VFSTCSAHLTVVIVFYGTLFFMY). Over 261–279 (GKPKSKDSMGADKEDLSDK) the chain is Extracellular. A helical transmembrane segment spans residues 280-299 (LIPLFYGVVTPMLNPIIYSL). The Cytoplasmic portion of the chain corresponds to 300-319 (RNKDVKAAVRRLLRPKGFTQ).

This sequence belongs to the G-protein coupled receptor 1 family.

The protein localises to the cell membrane. Odorant receptor. In Homo sapiens (Human), this protein is Olfactory receptor 2S2 (OR2S2).